A 341-amino-acid polypeptide reads, in one-letter code: Methionine import ATP-binding protein MetN 2 (341 aa).

The 240-residue stretch at 2–241 (IELKEVVKEY…PQHTVTKRFV (240 aa)) folds into the ABC transporter domain. Residue 38 to 45 (GFSGAGKS) coordinates ATP.

This sequence belongs to the ABC transporter superfamily. Methionine importer (TC 3.A.1.24) family. The complex is composed of two ATP-binding proteins (MetN), two transmembrane proteins (MetI) and a solute-binding protein (MetQ).

It is found in the cell membrane. The enzyme catalyses L-methionine(out) + ATP + H2O = L-methionine(in) + ADP + phosphate + H(+). It catalyses the reaction D-methionine(out) + ATP + H2O = D-methionine(in) + ADP + phosphate + H(+). Its function is as follows. Part of the ABC transporter complex MetNIQ involved in methionine import. Responsible for energy coupling to the transport system. The polypeptide is Methionine import ATP-binding protein MetN 2 (Staphylococcus aureus (strain USA300)).